Reading from the N-terminus, the 1159-residue chain is Syntaxin-binding protein 5-like (1159 aa).

The segment at 1–37 is disordered; sequence MKKFRKVLDGLTTSSPVNPGGSPGCGSAAGTPSAAPT. The segment covering 25 to 37 has biased composition (low complexity); the sequence is CGSAAGTPSAAPT. WD repeat units lie at residues 67–108, 115–154, 159–195, 214–248, 254–286, 307–350, 358–392, 414–491, 519–628, and 642–703; these read TALA…CHSQ, VLQMQFLINEGALVTACADDTLHLWSLRQRLPAILHSLKF, ITFCHLPFQSKWLYVGTERGNTHIVNIESFILSGYVI, HLSDSPKDEGKLLIGFESGTIVMWDLRAKRADFRI, IHSVSWHHEGRQFMCSHSDGSLSMWNMRNTAKP, PILK…KAIT, IVDFMVLCETPYLNEVQEPYAVVVLLEKDFVVVDL, TCTA…YKLK, QMIS…ELVV, and TCLD…STSG. Disordered stretches follow at residues 571-604 and 690-770; these read SDTENTPCFSDPSGHSPQPQPPSPRSNTPDSVRD and LTRS…KAQS. 2 stretches are compositionally biased toward polar residues: residues 699 to 713 and 721 to 739; these read QSTSGLTELSDNQVS and SPTSDHVNGHCTSPTSQPC. 4 WD repeats span residues 808–865, 874–946, 951–995, and 1009–1032; these read VTTL…TGTV, RFGF…QACL, ITES…LDVS, and CFTNGGQALYLCSPTEIQRITYSQ. The v-SNARE coiled-coil homology domain occupies 1094–1154; that stretch reads GIEGMKAAAG…HELMLKCKDK (61 aa).

Belongs to the WD repeat L(2)GL family.

The protein localises to the cytoplasm. Its subcellular location is the cell membrane. It is found in the membrane. In terms of biological role, may play a role in vesicle trafficking and exocytosis. This chain is Syntaxin-binding protein 5-like (stxbp5l), found in Danio rerio (Zebrafish).